Consider the following 75-residue polypeptide: MNPSEMQRKGPPQRWCLQVYPTAPKRQRPSRTGHDDDGGFVEKKRGKCGEKQERSDCYCVCVERSRHRRLHFVLY.

Positions 22–43 are disordered; that stretch reads TAPKRQRPSRTGHDDDGGFVEK. Over residues 32-43 the composition is skewed to basic and acidic residues; the sequence is TGHDDDGGFVEK.

Its subcellular location is the nucleus. May possess a function in tumorigenesis. This chain is Endogenous retrovirus group K member 5 Np9 protein (ERVK-5), found in Homo sapiens (Human).